A 273-amino-acid chain; its full sequence is MTKDIMDAVFIKEMAKTTSNLYRLGWDERNGGNITYLLDEKEVVEYLDVKQIIRTIPMDFDGEKLAGKYFLVTGSGKYFKNVEEAPAVNLGVIQVSEDGKAVHLLWGYTDGGLPTSELPAHFMSHIARLSVDPENRVVMHCHATHLLAMTFTHELTEREFTRTLWQMCTECLVVFPEGVGIIPWLVPGTNEIGEATSEKMKENRLIVWPHHGIYGAGKSMDETFGLIETAEKAAEVYTIVMSQGGIKQAITDEQLKALGERFSVEAKAGYLNN.

Glu-117 is an active-site residue. Zn(2+) is bound by residues His-140, His-142, and His-211.

The protein belongs to the aldolase class II family. RhaD subfamily. Zn(2+) serves as cofactor.

It is found in the cytoplasm. It carries out the reaction L-rhamnulose 1-phosphate = (S)-lactaldehyde + dihydroxyacetone phosphate. The protein operates within carbohydrate degradation; L-rhamnose degradation; glycerone phosphate from L-rhamnose: step 3/3. Catalyzes the reversible cleavage of L-rhamnulose-1-phosphate to dihydroxyacetone phosphate (DHAP) and L-lactaldehyde. This is Rhamnulose-1-phosphate aldolase from Listeria monocytogenes serotype 4a (strain HCC23).